The chain runs to 825 residues: Endochitinase A1 (825 aa).

The first 22 residues, 1 to 22 (MVSSKLSFVATAVAALAPLASA), serve as a signal peptide directing secretion. The GH18 domain occupies 29-338 (SNLAIYWGQG…DHMKDILLHC (310 aa)). Glu174 acts as the Proton donor in catalysis. Disordered regions lie at residues 338-568 (CDPS…TTTA), 680-736 (PVTE…VSTS), and 750-792 (PLIL…YTQE). Residues 344 to 554 (VTSSSAVPSS…STDESSTTVG (211 aa)) show a composition bias toward low complexity. A glycan (N-linked (GlcNAc...) asparagine) is linked at Asn559. Over residues 701–712 (EGSNPTQPSGAS) the composition is skewed to polar residues. Residue Asn717 is glycosylated (N-linked (GlcNAc...) asparagine). Over residues 772–792 (PSGQNSGSSSHVPIPPSYTQE) the composition is skewed to polar residues. Gly800 carries GPI-anchor amidated glycine lipidation. Positions 801-825 (AASRVTGLGHGLVLTVLTLSAFFVL) are cleaved as a propeptide — removed in mature form.

Belongs to the glycosyl hydrolase 18 family. Chitinase class III subfamily. In terms of processing, O-mannosylated by pmt4.

It is found in the cell membrane. It localises to the secreted. Its subcellular location is the cell wall. The enzyme catalyses Random endo-hydrolysis of N-acetyl-beta-D-glucosaminide (1-&gt;4)-beta-linkages in chitin and chitodextrins.. Its activity is regulated as follows. The cyclic peptide natural product argifin acts as a specific inhibitor. In terms of biological role, GPI-anchored chitinase involved in the degradation of chitin, a component of the cell walls of fungi and exoskeletal elements of some animals (including worms and arthropods). Required to reshape the cell wall at the sites where cell wall remodeling and/or cell wall maturation actively take place such as sites of conidia formation. The sequence is that of Endochitinase A1 (chiA1) from Aspergillus fumigatus (Neosartorya fumigata).